A 233-amino-acid chain; its full sequence is Large ribosomal subunit protein uL1 (233 aa).

This sequence belongs to the universal ribosomal protein uL1 family. As to quaternary structure, part of the 50S ribosomal subunit.

In terms of biological role, binds directly to 23S rRNA. The L1 stalk is quite mobile in the ribosome, and is involved in E site tRNA release. Its function is as follows. Protein L1 is also a translational repressor protein, it controls the translation of the L11 operon by binding to its mRNA. In Proteus vulgaris, this protein is Large ribosomal subunit protein uL1.